Reading from the N-terminus, the 106-residue chain is Tripartite terminase subunit 2 (106 aa).

The protein belongs to the herpesviridae TRM2 protein family. Associates with TRM1 and TRM3 to form the tripartite terminase complex.

The protein localises to the host nucleus. Functionally, component of the molecular motor that translocates viral genomic DNA in empty capsid during DNA packaging. Forms a tripartite terminase complex together with TRM1 and TRM3 in the host cytoplasm. Once the complex reaches the host nucleus, it interacts with the capsid portal vertex. This portal forms a ring in which genomic DNA is translocated into the capsid. This is Tripartite terminase subunit 2 from Homo sapiens (Human).